Consider the following 227-residue polypeptide: Isopentenyl-diphosphate Delta-isomerase 1 (227 aa).

K36 contributes to the substrate binding site. Mg(2+) is bound by residues H40 and H51. The 151-residue stretch at L49 to I199 folds into the Nudix hydrolase domain. Substrate contacts are provided by R70 and K74. Residue C86 is part of the active site. S87 contacts substrate. The Mg(2+) site is built by E146 and E148. The active site involves E148. K176 is modified (N6-acetyllysine). The Microbody targeting signal signature appears at H225–M227.

It belongs to the IPP isomerase type 1 family. In terms of assembly, monomer. Requires Mg(2+) as cofactor.

It is found in the peroxisome. It carries out the reaction isopentenyl diphosphate = dimethylallyl diphosphate. It participates in isoprenoid biosynthesis; dimethylallyl diphosphate biosynthesis; dimethylallyl diphosphate from isopentenyl diphosphate: step 1/1. In terms of biological role, catalyzes the 1,3-allylic rearrangement of the homoallylic substrate isopentenyl (IPP) to its highly electrophilic allylic isomer, dimethylallyl diphosphate (DMAPP). This chain is Isopentenyl-diphosphate Delta-isomerase 1 (IDI1), found in Mesocricetus auratus (Golden hamster).